The primary structure comprises 193 residues: Oleosin S1-2 (193 aa).

The residue at position 2 (Ala-2) is an N-acetylalanine. Residues 2–39 (ADVRTHAHQVQVHPLRQHEGGIKVVYPQSGPSSTQVLA) form a polar region. 3 consecutive transmembrane segments (helical) span residues 37–57 (VLAV…AGLT), 66–86 (ILAF…AFVI), and 87–107 (GLAM…LSSM). Residues 40–113 (VVAGVPVGGT…LSSMSWVLNH (74 aa)) are hydrophobic. The disordered stretch occupies residues 139–193 (AGQRTKDAGQTIEDKAHDVRESKTYDVRDRDTKGHTASGGDRDTKTTREVRVATT). Positions 142–193 (RTKDAGQTIEDKAHDVRESKTYDVRDRDTKGHTASGGDRDTKTTREVRVATT) are enriched in basic and acidic residues.

This sequence belongs to the oleosin family.

Its subcellular location is the lipid droplet. It is found in the membrane. May have a structural role to stabilize the lipid body during desiccation of the seed by preventing coalescence of the oil. Probably interacts with both lipid and phospholipid moieties of lipid bodies. May also provide recognition signals for specific lipase anchorage in lipolysis during seedling growth. In Brassica napus (Rape), this protein is Oleosin S1-2 (S1).